A 403-amino-acid polypeptide reads, in one-letter code: S-adenosylmethionine synthase (403 aa).

Position 16 (His16) interacts with ATP. Residue Asp18 participates in Mg(2+) binding. Glu44 is a K(+) binding site. L-methionine is bound by residues Glu57 and Gln100. Residues 100–110 are flexible loop; sequence QSNDIAQGVDH. Residues 167–169, 238–239, Asp247, 253–254, Ala270, and Lys274 each bind ATP; these read DAK, RF, and RK. Residue Asp247 participates in L-methionine binding. Position 278 (Lys278) interacts with L-methionine.

The protein belongs to the AdoMet synthase family. As to quaternary structure, homotetramer; dimer of dimers. Mg(2+) is required as a cofactor. It depends on K(+) as a cofactor.

The protein localises to the cytoplasm. The catalysed reaction is L-methionine + ATP + H2O = S-adenosyl-L-methionine + phosphate + diphosphate. It participates in amino-acid biosynthesis; S-adenosyl-L-methionine biosynthesis; S-adenosyl-L-methionine from L-methionine: step 1/1. Catalyzes the formation of S-adenosylmethionine (AdoMet) from methionine and ATP. The overall synthetic reaction is composed of two sequential steps, AdoMet formation and the subsequent tripolyphosphate hydrolysis which occurs prior to release of AdoMet from the enzyme. The polypeptide is S-adenosylmethionine synthase (Verminephrobacter eiseniae (strain EF01-2)).